The sequence spans 1153 residues: Integrin alpha-M (1153 aa).

A signal peptide spans M1–G16. Over F17–N1105 the chain is Extracellular. 2 FG-GAP repeats span residues N18 to P75 and I76 to Q135. A glycan (N-linked (GlcNAc...) asparagine) is linked at N58. C66 and C73 form a disulfide bridge. Residue N86 is glycosylated (N-linked (GlcNAc...) asparagine). C105 and C123 form a disulfide bridge. The region spanning I164–T338 is the VWFA domain. FG-GAP repeat units follow at residues Q339 to I390, N391 to W442, E443 to W503, E506 to S564, and H569 to K629. Residue N391 is glycosylated (N-linked (GlcNAc...) asparagine). 12 residues coordinate Ca(2+): D465, D467, D469, N471, N473, D529, N531, D533, D537, D592, D596, and D600. An intrachain disulfide couples C654 to C711. 10 N-linked (GlcNAc...) asparagine glycosylation sites follow: N696, N734, N772, N801, N881, N907, N941, N980, N994, and N1022. Residues C770 and C776 are joined by a disulfide bond. Disulfide bonds link C999/C1023 and C1028/C1033. N1045, N1051, and N1076 each carry an N-linked (GlcNAc...) asparagine glycan. The helical transmembrane segment at P1106–Y1129 threads the bilayer. At K1130–Q1153 the chain is on the cytoplasmic side. Positions G1132 to R1136 match the GFFKR motif motif.

It belongs to the integrin alpha chain family. As to quaternary structure, heterodimer of an alpha and a beta subunit. ITGAM associates with ITGB2. Found in a complex with CD177 and ITGB2/CD18. Interacts with JAM3. Interacts with THBD. Interacts with complement factor H/CFH; this interaction mediates adhesion of neutrophils to pathogens leading to pathogen clearance. Interacts with TMEM268; this interaction inhibits ITGAM degradation via the endosome-lysosome pathway. In terms of tissue distribution, predominantly expressed in monocytes and granulocytes. Expressed in a subset of peritoneal mast cells. Expressed in microglia (at protein level).

The protein resides in the cell membrane. Its subcellular location is the membrane raft. Functionally, integrin ITGAM/ITGB2 is implicated in various adhesive interactions of monocytes, macrophages and granulocytes as well as in mediating the uptake of complement-coated particles and pathogens. It is identical with CR-3, the receptor for the iC3b fragment of the third complement component. It probably recognizes the R-G-D peptide in C3b. Integrin ITGAM/ITGB2 is also a receptor for fibrinogen, factor X and ICAM1. It recognizes P1 and P2 peptides of fibrinogen gamma chain. Regulates neutrophil migration. In association with beta subunit ITGB2/CD18, required for CD177-PRTN3-mediated activation of TNF primed neutrophils. May regulate phagocytosis-induced apoptosis in extravasated neutrophils. May play a role in mast cell development. Required with TYROBP/DAP12 in microglia to control production of microglial superoxide ions which promote the neuronal apoptosis that occurs during brain development. The chain is Integrin alpha-M (Itgam) from Mus musculus (Mouse).